The sequence spans 766 residues: MSIMLSISRRRNSYILLNHSRFLRRFSYDVDPRPEIKLESQEFVVVKFVKTLQKTPQHDWASSESLSALVVSSSSASPLVFSQITRRLGSYSLAISFFEYLDAKSQSLKRREESLSLALQSVIEFAGSEPDPRDKLLRLYEIAKEKNIPLTVVATNLLIRWFGRMGMVNQSVLVYERLDSNMKNSQVRNVVVDVLLRNGLVDDAFKVLDEMLQKESVFPPNRITADIVLHEVWKGRLLTEEKIIALISRFSSHGVSPNSVWLTRFISSLCKNARANAAWDILSDLMKNKTPLEAPPFNALLSCLGRNMDISRMNDLVLKMDEVKIRPDVVTLGILINTLCKSRRVDEALEVFEKMRGKRTDDGNVIKADSIHFNTLIDGLCKVGRLKEAEELLVRMKLEERCAPNAVTYNCLIDGYCRAGKLETAKEVVSRMKEDEIKPNVVTVNTIVGGMCRHHGLNMAVVFFMDMEKEGVKGNVVTYMTLIHACCSVSNVEKAMYWYEKMLEAGCSPDAKIYYALISGLCQVRRDHDAIRVVEKLKEGGFSLDLLAYNMLIGLFCDKNNTEKVYEMLTDMEKEGKKPDSITYNTLISFFGKHKDFESVERMMEQMREDGLDPTVTTYGAVIDAYCSVGELDEALKLFKDMGLHSKVNPNTVIYNILINAFSKLGNFGQALSLKEEMKMKMVRPNVETYNALFKCLNEKTQGETLLKLMDEMVEQSCEPNQITMEILMERLSGSDELVKLRKFMQGYSVASPTEKASPFDVFSLG.

Residues 1–30 (MSIMLSISRRRNSYILLNHSRFLRRFSYDV) constitute a mitochondrion transit peptide. 16 PPR repeats span residues 151–181 (TVVA…LDSN), 184–218 (NSQV…ESVF), 221–257 (NRIT…GVSP), 258–292 (NSVW…KTPL), 293–327 (EAPP…KIRP), 328–358 (DVVT…MRGK), 369–404 (DSIH…RCAP), 405–439 (NAVT…EIKP), 440–474 (NVVT…GVKG), 475–509 (NVVT…GCSP), 510–544 (DAKI…GFSL), 545–579 (DLLA…GKKP), 580–614 (DSIT…GLDP), 615–650 (TVTT…KVNP), 651–685 (NTVI…MVRP), and 686–720 (NVET…SCEP).

This sequence belongs to the PPR family. P subfamily.

It is found in the mitochondrion. The polypeptide is Pentatricopeptide repeat-containing protein At3g61520, mitochondrial (Arabidopsis thaliana (Mouse-ear cress)).